The sequence spans 320 residues: Heterogeneous nuclear ribonucleoprotein A1-like 2 (320 aa).

A globular A domain region spans residues 4–94 (SASPKEPEQL…EPKRAVSRED (91 aa)). 2 positions are modified to phosphoserine: serine 6 and serine 22. 2 consecutive RRM domains span residues 14–97 (RKLF…DSQR) and 105–184 (KKIF…LPKQ). The segment at 95–185 (SQRPGAHLTV…EVRKALPKQE (91 aa)) is globular B domain. The segment at 181–216 (LPKQEMASASSSQRGRRGSGNFGGGRGDGFGGNDNF) is disordered. 4 positions are modified to asymmetric dimethylarginine; alternate: arginine 194, arginine 206, arginine 218, and arginine 225. Arginine 194, arginine 206, arginine 218, and arginine 225 each carry omega-N-methylarginine; alternate. Gly residues predominate over residues 198–216 (GSGNFGGGRGDGFGGNDNF). The RNA-binding RGG-box stretch occupies residues 218 to 240 (RGGNFSGRGGFGGSCGGGGYGGS). Positions 268 to 305 (NQSSNFGPMKGGNFGGRSSGPYGGGGQYFAKPQNQGGY) are nuclear targeting sequence. The segment at 271–320 (SNFGPMKGGNFGGRSSGPYGGGGQYFAKPQNQGGYGVSSSSSSYGSGRRF) is disordered. A compositionally biased stretch (gly residues) spans 276–294 (MKGGNFGGRSSGPYGGGGQ). Arginine 284 carries the post-translational modification Omega-N-methylarginine. At lysine 298 the chain carries N6-acetyllysine. Low complexity predominate over residues 307-320 (VSSSSSSYGSGRRF).

The protein localises to the nucleus. Its subcellular location is the cytoplasm. Functionally, involved in the packaging of pre-mRNA into hnRNP particles, transport of poly(A) mRNA from the nucleus to the cytoplasm and may modulate splice site selection. The polypeptide is Heterogeneous nuclear ribonucleoprotein A1-like 2 (HNRNPA1L2) (Homo sapiens (Human)).